We begin with the raw amino-acid sequence, 97 residues long: MLNEEQVKKVAHLARLELSGEEVAQFTTQLGSILDYFQQLEELNVTDVPPTTRAIESSNITRADQLHPWAERENILAIAPEQDGDFFRVPKIISTED.

The protein belongs to the GatC family. In terms of assembly, heterotrimer of A, B and C subunits.

It catalyses the reaction L-glutamyl-tRNA(Gln) + L-glutamine + ATP + H2O = L-glutaminyl-tRNA(Gln) + L-glutamate + ADP + phosphate + H(+). It carries out the reaction L-aspartyl-tRNA(Asn) + L-glutamine + ATP + H2O = L-asparaginyl-tRNA(Asn) + L-glutamate + ADP + phosphate + 2 H(+). Functionally, allows the formation of correctly charged Asn-tRNA(Asn) or Gln-tRNA(Gln) through the transamidation of misacylated Asp-tRNA(Asn) or Glu-tRNA(Gln) in organisms which lack either or both of asparaginyl-tRNA or glutaminyl-tRNA synthetases. The reaction takes place in the presence of glutamine and ATP through an activated phospho-Asp-tRNA(Asn) or phospho-Glu-tRNA(Gln). The protein is Aspartyl/glutamyl-tRNA(Asn/Gln) amidotransferase subunit C of Cyanothece sp. (strain PCC 7425 / ATCC 29141).